The primary structure comprises 216 residues: MOB kinase activator-like 2A (216 aa).

The Zn(2+) site is built by C81, C86, H162, and H167.

It belongs to the MOB1/phocein family.

It localises to the nucleus. The chain is MOB kinase activator-like 2A from Arabidopsis thaliana (Mouse-ear cress).